We begin with the raw amino-acid sequence, 319 residues long: Shiga-like toxin 2 subunit A (319 aa).

The N-terminal stretch at 1-22 is a signal peptide; sequence MKCILFKWVLCLLLGFSSVSYS. Positions 23–272 are A1; it reads REFTIDFSTQ…CHHQGARSVR (250 aa). Glu-189 is a catalytic residue. A disulfide bond links Cys-263 and Cys-282. The segment at 273-314 is A2; sequence AVNEESQPECQITGDRPVIKINNTLWESNTAAAFLNRKSQFL.

This sequence belongs to the ribosome-inactivating protein family. Shiga-like toxin contains a single A subunit and multiple copies of a B subunit.

Its subcellular location is the secreted. It catalyses the reaction Endohydrolysis of the N-glycosidic bond at one specific adenosine on the 28S rRNA.. Its function is as follows. The A subunit is responsible for inhibiting protein synthesis through the catalytic inactivation of 60S ribosomal subunits. After endocytosis, the A subunit is cleaved by furin in two fragments, A1 and A2: A1 is the catalytically active fragment, and A2 is essential for holotoxin assembly with the B subunits. In Escherichia coli O157:H7 (Bacteriophage 933W), this protein is Shiga-like toxin 2 subunit A (stxA2).